Reading from the N-terminus, the 83-residue chain is RNA-binding protein Hfq (83 aa).

Positions 9-69 (DYFLNQLRKD…ISTFAPARNV (61 aa)) constitute a Sm domain.

Belongs to the Hfq family. As to quaternary structure, homohexamer.

Its function is as follows. RNA chaperone that binds small regulatory RNA (sRNAs) and mRNAs to facilitate mRNA translational regulation in response to envelope stress, environmental stress and changes in metabolite concentrations. Also binds with high specificity to tRNAs. This Exiguobacterium sibiricum (strain DSM 17290 / CCUG 55495 / CIP 109462 / JCM 13490 / 255-15) protein is RNA-binding protein Hfq.